A 665-amino-acid polypeptide reads, in one-letter code: Dystrophia myotonica WD repeat-containing protein (665 aa).

Residues 1–11 (MAAGGAEGGPG) show a composition bias toward gly residues. Disordered stretches follow at residues 1 to 91 (MAAG…PALP) and 100 to 119 (LGDPDGAGEPPSTPSGLGAG). N-acetylalanine is present on A2. Residues 52–64 (PAPPQPTQPPPGP) show a composition bias toward pro residues. A compositionally biased stretch (low complexity) spans 65–76 (AAASGPGAAGPA). Over residues 77-89 (SSPPPAGPGPGPA) the composition is skewed to pro residues. WD repeat units lie at residues 208–248 (IDKT…TSTP), 279–318 (VGEGPLNEFAFSPDGRHLACVSQDGCLRVFHFDSMLLRGL), 321–360 (SYFGGLLCVCWSPDGRYVVTGGEDDLVTVWSFTEGRVVAR), and 363–445 (GHKS…LSPH). Disordered regions lie at residues 380 to 413 (AEEAASASADGDPSGEEEEPEVTSSDTGAPVSPL), 446 to 506 (PSLA…SMEP), 524 to 564 (RDRG…RSRL), and 628 to 665 (DEETEAQAGQASWPRSPSKSVVEGISSQPGSSPSGTVV). Residues 450 to 491 (RTRTLPGTPGATPPASGSSRAGETGAGPLPRSLSRSNSLPHP) are compositionally biased toward low complexity. S487 carries the phosphoserine modification. R543 bears the Omega-N-methylarginine mark. One copy of the WD 5 repeat lies at 592-629 (IAQERLTVLLFLEDCIITACQEGLICTWARPGKAFTDE). Residues 634-646 (QAGQASWPRSPSK) show a composition bias toward polar residues. A compositionally biased stretch (low complexity) spans 653 to 665 (SSQPGSSPSGTVV).

In terms of assembly, component of the USP12/DMWD/WDR48 deubiquitinating complex. Interacts with USP12; promotes its enzymatic activity. Interacts with USP46. Widely expressed in brain where it localizes to the olfactory bulb, forebrain, thalamus, hippocampus, cerebellum, cortex and hypothalamus (at protein level). Expression seems to be particularly strong in areas of high synaptic density such as the glomerular layer of the olfactory bulb, and mossy fiber terminal fields of the hippocampus (at protein level). Expressed in retina, with strongest expression in the external and internal plexiform layers (at protein level). Strongly expressed in brain and testis. Also detected at lower levels in heart, kidney, liver, lung, ovary, uterus, bladder and skeletal muscle. In testis, expression seems to be restricted to secondary spermatocytes.

It is found in the cytoplasm. The protein resides in the nucleus. It localises to the perikaryon. The protein localises to the cell projection. Its subcellular location is the dendrite. In terms of biological role, regulator of the deubiquitinating USP12/DMWD/WDR48 complex. Functions as a cofactor that promotes USP12 enzymatic activity. The polypeptide is Dystrophia myotonica WD repeat-containing protein (Dmwd) (Mus musculus (Mouse)).